Consider the following 360-residue polypeptide: Putative agmatine deiminase (360 aa).

Catalysis depends on Cys353, which acts as the Amidino-cysteine intermediate.

This sequence belongs to the agmatine deiminase family.

It catalyses the reaction agmatine + H2O = N-carbamoylputrescine + NH4(+). The chain is Putative agmatine deiminase from Vibrio parahaemolyticus serotype O3:K6 (strain RIMD 2210633).